The primary structure comprises 709 residues: Phosphoprotein (709 aa).

Residues 1-35 (MDKLELVNDGLNIIDFIQKNQKEIQKTYGRSSIQQ) form an N0 binding region. A disordered region spans residues 53 to 92 (SGESEQVEGGMSKDDGDVERRNLEDLSSTSPTDGTIGKRV). Basic and acidic residues predominate over residues 63-76 (MSKDDGDVERRNLE). Residues 110–140 (VVTDVVYHDHGGECTGYGFTSSPERGWSDYT) form an interaction with host STAT1 region. A Phosphoserine; by host modification is found at Ser-257. The tract at residues 265–324 (ISPEDEEPSSVGGKPNESIGRTIEGQSIRDNLQAKDNKSTDVPGAGPKDSAVKEEPPQKR) is disordered. Ser-350 is modified (phosphoserine; by host). A disordered region spans residues 384 to 473 (VQTADRQRPG…VNPVDDNDSL (90 aa)). Composition is skewed to polar residues over residues 416–426 (GTENVPGSKSG) and 444–456 (NAEN…STAV). Residues 475–580 (DKYIMPSDDF…LVSMMIMIPG (106 aa)) are multimerization.

In terms of assembly, homotetramer. Interacts (via multimerization domain) with polymerase L; this interaction forms the polymerase L-P complex. Interacts (via N-terminus) with N0 (via Ncore); this interaction allows P to chaperon N0 to avoid N polymerization before encapsidation. Interacts (via C-terminus) with N-RNA template (via C-terminus); this interaction positions the polymerase on the template for both transcription and replication. Interacts with host STAT1.

It localises to the virion. The protein localises to the host cytoplasm. In terms of biological role, essential cofactor of the RNA polymerase L that plays a central role in the transcription and replication by forming the polymerase complex with RNA polymerase L and recruiting L to the genomic N-RNA template for RNA synthesis. Also plays a central role in the encapsidation of nascent RNA chains by forming the encapsidation complex with the nucleocapsid protein N (N-P complex). Acts as a chaperone for newly synthesized free N protein, so-called N0, allowing encapsidation of nascent RNA chains during replication. The nucleoprotein protein N prevents excessive phosphorylation of P, which leads to down-regulation of viral transcription/ replication. Participates, together with N, in the formation of viral factories (viroplasms), which are large inclusions in the host cytoplasm where replication takes place. The sequence is that of Phosphoprotein (P/V/C) from Nipah virus.